A 178-amino-acid polypeptide reads, in one-letter code: Matrix-remodeling-associated protein 7 (178 aa).

Residues 7-27 (LLAALPALVTALALLLAWLLL) traverse the membrane as a helical segment. Positions 33 to 121 (RVPAPESTAS…AFSFKYSPGQ (89 aa)) are disordered. Residues 48 to 65 (APAPPEPPESCAPEPAPE) are compositionally biased toward pro residues. Acidic residues predominate over residues 76-85 (PEESEAEEPA). A phosphoserine mark is found at Ser79 and Ser165.

It localises to the membrane. The polypeptide is Matrix-remodeling-associated protein 7 (Mxra7) (Mus musculus (Mouse)).